Here is a 259-residue protein sequence, read N- to C-terminus: uncharacterized protein (259 aa).

A divalent metal cation-binding residues include histidine 9, histidine 11, glutamate 97, histidine 133, histidine 157, and aspartate 207.

The protein belongs to the metallo-dependent hydrolases superfamily. TatD-type hydrolase family. A divalent metal cation serves as cofactor.

This is an uncharacterized protein from Escherichia coli (strain K12).